Reading from the N-terminus, the 425-residue chain is RNA polymerase sigma factor SigA (425 aa).

A sigma-70 factor domain-2 region spans residues 193-263 (MVQSNLRLVV…TRAIADQSRT (71 aa)). An Interaction with polymerase core subunit RpoC motif is present at residues 217–220 (DLIQ). A sigma-70 factor domain-3 region spans residues 272–347 (ETISRIKKTT…EADGETPEDE (76 aa)). The sigma-70 factor domain-4 stretch occupies residues 360–413 (VLDTLSPRERDVLRLRYGLDDGRMKTLEEIGQIFNVTRERIRQIEAKALRKLRH). A DNA-binding region (H-T-H motif) is located at residues 386 to 405 (LEEIGQIFNVTRERIRQIEA).

Belongs to the sigma-70 factor family. RpoD/SigA subfamily. In terms of assembly, interacts transiently with the RNA polymerase catalytic core.

The protein localises to the cytoplasm. Functionally, sigma factors are initiation factors that promote the attachment of RNA polymerase to specific initiation sites and are then released. This sigma factor is the primary sigma factor during exponential growth. The chain is RNA polymerase sigma factor SigA from Synechocystis sp. (strain ATCC 27184 / PCC 6803 / Kazusa).